Here is a 329-residue protein sequence, read N- to C-terminus: Phenylalanine--tRNA ligase alpha subunit (329 aa).

Glu254 provides a ligand contact to Mg(2+).

This sequence belongs to the class-II aminoacyl-tRNA synthetase family. Phe-tRNA synthetase alpha subunit type 1 subfamily. Tetramer of two alpha and two beta subunits. It depends on Mg(2+) as a cofactor.

The protein localises to the cytoplasm. The enzyme catalyses tRNA(Phe) + L-phenylalanine + ATP = L-phenylalanyl-tRNA(Phe) + AMP + diphosphate + H(+). This Haemophilus influenzae (strain PittEE) protein is Phenylalanine--tRNA ligase alpha subunit.